Reading from the N-terminus, the 348-residue chain is Ileal sodium/bile acid cotransporter (348 aa).

Over methionine 1–alanine 28 the chain is Extracellular. N-linked (GlcNAc...) asparagine glycosylation is found at asparagine 3 and asparagine 10. A helical transmembrane segment spans residues isoleucine 29 to methionine 49. At glycine 50–leucine 81 the chain is on the cytoplasmic side. A helical membrane pass occupies residues threonine 82–isoleucine 102. Topologically, residues glutamine 103–serine 126 are extracellular. The chain crosses the membrane as a helical span at residues valine 127 to isoleucine 147. Over tyrosine 148 to threonine 157 the chain is Cytoplasmic. The chain crosses the membrane as a helical span at residues isoleucine 158–isoleucine 178. The Extracellular segment spans residues glycine 179–lysine 195. Residues isoleucine 196–tyrosine 216 traverse the membrane as a helical segment. Residues glutamine 217–proline 224 are Cytoplasmic-facing. The chain crosses the membrane as a helical span at residues lysine 225–alanine 245. Topologically, residues arginine 246–asparagine 284 are extracellular. The helical transmembrane segment at leucine 285–leucine 305 threads the bilayer. Topologically, residues glycine 306–lysine 348 are cytoplasmic. The segment covering leucine 322–proline 332 has biased composition (basic and acidic residues). The tract at residues leucine 322–lysine 348 is disordered. Serine 335 carries the phosphoserine modification.

The protein belongs to the bile acid:sodium symporter (BASS) (TC 2.A.28) family. As to quaternary structure, monomer and homodimer. As to expression, mainly expressed in ileum and kidney, lower expression in jejunum.

The protein localises to the membrane. The enzyme catalyses taurocholate(out) + 2 Na(+)(out) = taurocholate(in) + 2 Na(+)(in). It carries out the reaction cholate(out) + 2 Na(+)(out) = cholate(in) + 2 Na(+)(in). It catalyses the reaction taurochenodeoxycholate(out) + 2 Na(+)(out) = taurochenodeoxycholate(in) + 2 Na(+)(in). The catalysed reaction is tauroursodeoxycholate(out) + 2 Na(+)(out) = tauroursodeoxycholate(in) + 2 Na(+)(in). The enzyme catalyses glycocholate(out) + 2 Na(+)(out) = glycocholate(in) + 2 Na(+)(in). It carries out the reaction tauronorcholate(out) + 2 Na(+)(out) = tauronorcholate(in) + 2 Na(+)(in). It catalyses the reaction tauroallocholate(out) + 2 Na(+)(out) = tauroallocholate(in) + 2 Na(+)(in). The catalysed reaction is taurodeoxycholate(out) + 2 Na(+)(out) = taurodeoxycholate(in) + 2 Na(+)(in). The enzyme catalyses tauro-beta-muricholate(out) + 2 Na(+)(out) = tauro-beta-muricholate(in) + 2 Na(+)(in). Plays a critical role in the sodium-dependent reabsorption of bile acids from the lumen of the small intestine. Transports various bile acids, unconjugated or conjugated, such as cholate and taurocholate. Also responsible for bile acid transport in the renal proximal tubules, a salvage mechanism that helps conserve bile acids. Works collaboratively with the Na(+)-taurocholate cotransporting polypeptide (NTCP), the organic solute transporter (OST), and the bile salt export pump (BSEP), to ensure efficacious biological recycling of bile acids during enterohepatic circulation. The sequence is that of Ileal sodium/bile acid cotransporter (SLC10A2) from Cricetulus griseus (Chinese hamster).